We begin with the raw amino-acid sequence, 211 residues long: Large ribosomal subunit protein eL13 (211 aa).

K16 is modified (N6-acetyllysine). A phosphoserine mark is found at S52 and S77. Glycyl lysine isopeptide (Lys-Gly) (interchain with G-Cter in SUMO2) cross-links involve residues K123 and K145. Residue K174 forms a Glycyl lysine isopeptide (Lys-Gly) (interchain with G-Cter in SUMO1); alternate linkage. Residues K174 and K177 each participate in a glycyl lysine isopeptide (Lys-Gly) (interchain with G-Cter in SUMO2); alternate cross-link. K177 is modified (N6-acetyllysine; alternate).

It belongs to the eukaryotic ribosomal protein eL13 family. Component of the 60S large ribosomal subunit (LSU).

It is found in the cytoplasm. Component of the ribosome, a large ribonucleoprotein complex responsible for the synthesis of proteins in the cell. The small ribosomal subunit (SSU) binds messenger RNAs (mRNAs) and translates the encoded message by selecting cognate aminoacyl-transfer RNA (tRNA) molecules. The large subunit (LSU) contains the ribosomal catalytic site termed the peptidyl transferase center (PTC), which catalyzes the formation of peptide bonds, thereby polymerizing the amino acids delivered by tRNAs into a polypeptide chain. The nascent polypeptides leave the ribosome through a tunnel in the LSU and interact with protein factors that function in enzymatic processing, targeting, and the membrane insertion of nascent chains at the exit of the ribosomal tunnel. As part of the LSU, it is probably required for its formation and the maturation of rRNAs. Plays a role in bone development. The chain is Large ribosomal subunit protein eL13 (RPL13) from Bos taurus (Bovine).